Reading from the N-terminus, the 449-residue chain is Lipase (449 aa).

An N-terminal signal peptide occupies residues methionine 1 to alanine 23. Residues arginine 58–lysine 77 form a disordered region. Serine 206 serves as the catalytic Charge relay system. The Ca(2+) site is built by glycine 318, aspartate 387, and aspartate 396. Hemolysin-type calcium-binding repeat units lie at residues isoleucine 372–isoleucine 389 and glutamate 390–phenylalanine 407.

It belongs to the AB hydrolase superfamily. Lipase family.

The enzyme catalyses a triacylglycerol + H2O = a diacylglycerol + a fatty acid + H(+). In Pseudomonas fluorescens, this protein is Lipase.